The primary structure comprises 182 residues: Shikimate kinase (182 aa).

Residue 14-19 (GAGKTT) coordinates ATP. Thr-18 is a binding site for Mg(2+). The substrate site is built by Asp-36, Arg-60, and Gly-84. An ATP-binding site is contributed by Arg-122. Arg-141 is a substrate binding site.

The protein belongs to the shikimate kinase family. Monomer. Mg(2+) serves as cofactor.

It is found in the cytoplasm. It catalyses the reaction shikimate + ATP = 3-phosphoshikimate + ADP + H(+). The protein operates within metabolic intermediate biosynthesis; chorismate biosynthesis; chorismate from D-erythrose 4-phosphate and phosphoenolpyruvate: step 5/7. In terms of biological role, catalyzes the specific phosphorylation of the 3-hydroxyl group of shikimic acid using ATP as a cosubstrate. The protein is Shikimate kinase of Marinomonas sp. (strain MWYL1).